A 186-amino-acid chain; its full sequence is Threonylcarbamoyl-AMP synthase (186 aa).

One can recognise a YrdC-like domain in the interval 2–186; it reads STEFEQAVAA…ARTGAVIRPS (185 aa).

Belongs to the SUA5 family. TsaC subfamily.

The protein localises to the cytoplasm. It carries out the reaction L-threonine + hydrogencarbonate + ATP = L-threonylcarbamoyladenylate + diphosphate + H2O. Required for the formation of a threonylcarbamoyl group on adenosine at position 37 (t(6)A37) in tRNAs that read codons beginning with adenine. Catalyzes the conversion of L-threonine, HCO(3)(-)/CO(2) and ATP to give threonylcarbamoyl-AMP (TC-AMP) as the acyladenylate intermediate, with the release of diphosphate. This chain is Threonylcarbamoyl-AMP synthase, found in Aeromonas salmonicida (strain A449).